The following is a 204-amino-acid chain: Protein OPG030 (204 aa).

The BACK domain occupies 95-177 (FLRQYINNNI…ITYSELTNAI (83 aa)).

This sequence belongs to the orthopoxvirus OPG030 family.

This is Protein OPG030 (OPG30) from Homo sapiens (Human).